Reading from the N-terminus, the 863-residue chain is Protein translocase subunit SecA (863 aa).

ATP-binding positions include glutamine 88, 106-110 (GEGKT), and aspartate 496. Positions 818-842 (EVKTEPVITKKKPARNEPCPCGSGK) are disordered. Zn(2+) contacts are provided by cysteine 836, cysteine 838, cysteine 847, and cysteine 848.

It belongs to the SecA family. In terms of assembly, monomer and homodimer. Part of the essential Sec protein translocation apparatus which comprises SecA, SecYEG and auxiliary proteins SecDF-YajC and YidC. Zn(2+) serves as cofactor.

Its subcellular location is the cell inner membrane. It is found in the cytoplasm. It catalyses the reaction ATP + H2O + cellular proteinSide 1 = ADP + phosphate + cellular proteinSide 2.. Its function is as follows. Part of the Sec protein translocase complex. Interacts with the SecYEG preprotein conducting channel. Has a central role in coupling the hydrolysis of ATP to the transfer of proteins into and across the cell membrane, serving as an ATP-driven molecular motor driving the stepwise translocation of polypeptide chains across the membrane. The protein is Protein translocase subunit SecA of Nitratiruptor sp. (strain SB155-2).